We begin with the raw amino-acid sequence, 558 residues long: Acylase ACY 1 proenzyme (558 aa).

Thr-368 acts as the Nucleophile in catalysis.

This sequence belongs to the gamma-glutamyltransferase family. As to quaternary structure, dimer of two non-identical chains processed from the same precursor.

It carries out the reaction (7R)-7-(4-carboxybutanamido)cephalosporanate + H2O = (7R)-7-aminocephalosporanate + glutarate. It catalyses the reaction an N-terminal (5-L-glutamyl)-[peptide] + an alpha-amino acid = 5-L-glutamyl amino acid + an N-terminal L-alpha-aminoacyl-[peptide]. The enzyme catalyses glutathione + H2O = L-cysteinylglycine + L-glutamate. The catalysed reaction is an S-substituted glutathione + H2O = an S-substituted L-cysteinylglycine + L-glutamate. Its function is as follows. Besides the cephalosporin acylase I activity which converts GL-7ACA into 7-ACA; this enzyme displays some gamma glutamyltranspeptidase activity. The polypeptide is Acylase ACY 1 proenzyme (acyI) (Pseudomonas sp. (strain SE83)).